The following is a 276-amino-acid chain: Nickel import system permease protein NikC (276 aa).

Transmembrane regions (helical) follow at residues 10–30 (LIFFVFGAFIFVMIVLQFFVS), 73–93 (LFVTVLTLIAIVVIGVTLGLF), 108–128 (FIDVGLSIPEFIIVIALASFF), 186–206 (IIPAIIVLMVVDFGKIILYIS), and 238–258 (IMLIAPASVIAITILIFNLTG). Residues 69-258 (ARSTLFVTVL…ITILIFNLTG (190 aa)) form the ABC transmembrane type-1 domain.

Belongs to the binding-protein-dependent transport system permease family. OppBC subfamily. As to quaternary structure, the complex is composed of two ATP-binding proteins (NikD and NikE), two transmembrane proteins (NikB and NikC) and a solute-binding protein (NikA).

It localises to the cell membrane. Its function is as follows. Part of the ABC transporter complex NikABCDE (Opp2) involved in nickel import. Probably responsible for the translocation of the substrate across the membrane. The protein is Nickel import system permease protein NikC of Staphylococcus aureus (strain bovine RF122 / ET3-1).